The primary structure comprises 180 residues: Stathmin-3 (180 aa).

The 143-residue stretch at 38-180 (GDMEVKQLDK…NKEQREEISG (143 aa)) folds into the SLD domain. A compositionally biased stretch (low complexity) spans 60-74 (SPSDLSPESPILSSP). The tract at residues 60–82 (SPSDLSPESPILSSPPKKKDLSL) is disordered. Positions 75 to 179 (PKKKDLSLEE…RNKEQREEIS (105 aa)) form a coiled coil.

It belongs to the stathmin family.

The sequence is that of Stathmin-3 (STMN3) from Gallus gallus (Chicken).